The sequence spans 1212 residues: uncharacterized protein (1212 aa).

Polar residues predominate over residues 1–31 (MASIQTKLVSQPQTQQPLQNGFFNNYQQNIY). Disordered stretches follow at residues 1–70 (MASI…HLQQ), 119–169 (PQAQ…FGTN), 211–231 (SLNN…SNNN), 248–374 (INIG…NNNK), 655–681 (QQQP…TQQQ), 935–957 (NQNQ…CNNA), and 973–1125 (QLQP…QQLQ). Low complexity-rich tracts occupy residues 48–70 (PQQQ…HLQQ) and 119–163 (PQAQ…NNNN). The span at 256–275 (NNSNTNNVNNINTNNTNNNN) shows a compositional bias: low complexity. 2 stretches are compositionally biased toward polar residues: residues 276–285 (KSGSIDQFGS) and 292–317 (YVNS…SHSP). Over residues 322 to 340 (INSNININSNLQSPQNIQQ) the composition is skewed to low complexity. The span at 341–351 (TILSPNISPNH) shows a compositional bias: polar residues. Residues 352-373 (NNNNNNNNNNNNNNNNNNNNNN) show a composition bias toward low complexity. Low complexity-rich tracts occupy residues 998 to 1022 (NSVN…NNNN) and 1037 to 1125 (QNNN…QQLQ).

This is an uncharacterized protein from Dictyostelium discoideum (Social amoeba).